The chain runs to 369 residues: Probable trehalose-phosphate phosphatase I (369 aa).

It belongs to the trehalose phosphatase family. The cofactor is a divalent metal cation.

It catalyses the reaction alpha,alpha-trehalose 6-phosphate + H2O = alpha,alpha-trehalose + phosphate. Its pathway is glycan biosynthesis; trehalose biosynthesis. Functionally, removes the phosphate from trehalose 6-phosphate to produce free trehalose. Trehalose accumulation in plant may improve abiotic stress tolerance. The protein is Probable trehalose-phosphate phosphatase I (TPPI) of Arabidopsis thaliana (Mouse-ear cress).